The sequence spans 174 residues: Peptide deformylase (174 aa).

Fe cation contacts are provided by C98 and H140. E141 is an active-site residue. H144 lines the Fe cation pocket.

The protein belongs to the polypeptide deformylase family. Requires Fe(2+) as cofactor.

It catalyses the reaction N-terminal N-formyl-L-methionyl-[peptide] + H2O = N-terminal L-methionyl-[peptide] + formate. Functionally, removes the formyl group from the N-terminal Met of newly synthesized proteins. Requires at least a dipeptide for an efficient rate of reaction. N-terminal L-methionine is a prerequisite for activity but the enzyme has broad specificity at other positions. This is Peptide deformylase from Bradyrhizobium diazoefficiens (strain JCM 10833 / BCRC 13528 / IAM 13628 / NBRC 14792 / USDA 110).